A 576-amino-acid chain; its full sequence is Trehalase 2 (576 aa).

It belongs to the glycosyl hydrolase 15 family.

The enzyme catalyses alpha,alpha-trehalose + H2O = alpha-D-glucose + beta-D-glucose. It participates in glycan degradation; trehalose degradation; D-glucose from alpha,alpha-trehalose: step 1/1. In terms of biological role, catalyzes the hydrolysis of alpha,alpha-trehalose into two molecules of D-glucose. The sequence is that of Trehalase 2 (treH2) from Sulfolobus acidocaldarius (strain ATCC 33909 / DSM 639 / JCM 8929 / NBRC 15157 / NCIMB 11770).